A 236-amino-acid chain; its full sequence is Orotidine 5'-phosphate decarboxylase (236 aa).

Residues Asp-16, Lys-38, 65–74, Thr-123, Arg-184, Gln-193, Gly-213, and Arg-214 contribute to the substrate site; that span reads DLKLHDIGNT. The Proton donor role is filled by Lys-67.

Belongs to the OMP decarboxylase family. Type 1 subfamily. In terms of assembly, homodimer.

It carries out the reaction orotidine 5'-phosphate + H(+) = UMP + CO2. It participates in pyrimidine metabolism; UMP biosynthesis via de novo pathway; UMP from orotate: step 2/2. Its function is as follows. Catalyzes the decarboxylation of orotidine 5'-monophosphate (OMP) to uridine 5'-monophosphate (UMP). This chain is Orotidine 5'-phosphate decarboxylase, found in Methylobacterium sp. (strain 4-46).